The sequence spans 553 residues: 5'-nucleotidase domain-containing protein 2 (553 aa).

Residues 26-51 (SSSPSCPGCGPPGPGAHCPSTPRSAP) form a disordered region. D106 functions as the Nucleophile in the catalytic mechanism. Mg(2+)-binding residues include D106, D108, and D391. The Proton donor role is filled by D108.

It belongs to the 5'(3')-deoxyribonucleotidase family. As to quaternary structure, interacts with tyrosine 3-monooxygenase TH; the interaction results in reduced phosphorylation and decreased catalytic activity of TH. In terms of tissue distribution, expressed in eye iridocorneal angle.

The protein resides in the cytoplasm. Its function is as follows. Promotes dephosphorylation of tyrosine 3-monooxygenase TH which decreases TH catalytic activity and leads to reduced synthesis of catecholamines including dopamine, noradrenaline and adrenaline. The exact mechanism of activity is unknown but may act as a phosphatase or promote the activity of phosphatases or may inhibit phosphorylation by acting as a barrier to interfere with protein kinase access. This is 5'-nucleotidase domain-containing protein 2 (Nt5dc2) from Rattus norvegicus (Rat).